The chain runs to 195 residues: Large ribosomal subunit protein uL11m (195 aa).

This sequence belongs to the universal ribosomal protein uL11 family. Component of the mitochondrial ribosome large subunit (39S) which comprises a 16S rRNA and about 50 distinct proteins.

It localises to the mitochondrion. In Caenorhabditis elegans, this protein is Large ribosomal subunit protein uL11m (mrpl-11).